A 185-amino-acid chain; its full sequence is Ribosome-recycling factor (185 aa).

The disordered stretch occupies residues 138–157 (ELKKLEKDHTASEDEVKRAQ).

The protein belongs to the RRF family.

Its subcellular location is the cytoplasm. Functionally, responsible for the release of ribosomes from messenger RNA at the termination of protein biosynthesis. May increase the efficiency of translation by recycling ribosomes from one round of translation to another. In Desulfitobacterium hafniense (strain DSM 10664 / DCB-2), this protein is Ribosome-recycling factor.